The following is a 702-amino-acid chain: Kinesin-like protein KIF3A (702 aa).

Residues 14–345 (NVKVVVRCRP…LRYANRAKNI (332 aa)) enclose the Kinesin motor domain. Residue 100–107 (GQTGTGKT) coordinates ATP. Residues 355–593 (PKDALLRQFQ…LSRELRLQML (239 aa)) adopt a coiled-coil conformation. 2 disordered regions span residues 372–424 (KKLE…KMIE) and 667–702 (LMKL…SLLQ). The segment covering 376–400 (EGEEISGSDISGSEEDDDEEGEIGE) has biased composition (acidic residues). The segment covering 410-424 (DQAGKKKVSPDKMIE) has biased composition (basic and acidic residues). The globular stretch occupies residues 600–702 (PRDYQEMIEN…PETVIDSLLQ (103 aa)). Basic residues predominate over residues 675–690 (TSKGKARPKTGRRKRS). S690 carries the post-translational modification Phosphoserine.

The protein belongs to the TRAFAC class myosin-kinesin ATPase superfamily. Kinesin family. Kinesin II subfamily. As to quaternary structure, heterodimer of KIF3A and KIF3B. Interacts with CIMAP3. Interacts with CLN3. Interacts with DCTN1. Interacts with FLCN. Interacts with AP3B1.

The protein localises to the cytoplasm. Its subcellular location is the cytoskeleton. The protein resides in the cell projection. It localises to the cilium. It is found in the microtubule organizing center. The protein localises to the centrosome. Its subcellular location is the centriole. Functionally, microtubule-based anterograde translocator for membranous organelles. Plus end-directed microtubule sliding activity in vitro. Plays a role in primary cilia formation. Plays a role in centriole cohesion and subdistal appendage organization and function. Regulates the formation of the subdistal appendage via recruitment of DCTN1 to the centriole. Also required for ciliary basal feet formation and microtubule anchoring to mother centriole. The polypeptide is Kinesin-like protein KIF3A (KIF3A) (Pongo abelii (Sumatran orangutan)).